The chain runs to 189 residues: Apolipoprotein D (189 aa).

The signal sequence occupies residues 1–20; that stretch reads MVTMLMFLATLAGLFTTAKG. Pyrrolidone carboxylic acid is present on glutamine 21. 2 cysteine pairs are disulfide-bonded: cysteine 28-cysteine 134 and cysteine 61-cysteine 185. N-linked (GlcNAc...) asparagine glycosylation is found at asparagine 65 and asparagine 98.

The protein belongs to the calycin superfamily. Lipocalin family. Homodimer. As to expression, highest levels of expression in brain, testis, virgin mammary gland and salivary gland. Moderate levels in skeletal muscle, lactating mammary gland and thymus. Low levels in lung and lymph node. No expression in kidney, pancreas, liver or spleen.

It localises to the secreted. Functionally, APOD occurs in the macromolecular complex with lecithin-transport and binding of bilin. Appears to be able to transport a variety of ligands in a number of different contexts. The sequence is that of Apolipoprotein D (Apod) from Mus musculus (Mouse).